The sequence spans 523 residues: NAD(P)H-quinone oxidoreductase subunit 2 (523 aa).

14 helical membrane passes run 29-49 (AIAP…VDLA), 57-77 (WVPP…AQQW), 94-114 (LAIA…LISW), 123-143 (PIGE…LLCG), 147-167 (LVSV…LAGY), 182-202 (LLVG…LYGL), 221-243 (PLAA…AVPF), 255-275 (PTPV…ALAL), 291-311 (LLFT…ALAQ), 317-337 (MLAY…VCGT), 345-365 (VLYM…IILF), 389-409 (LGLS…GFFG), 424-444 (LLVV…ISVI), and 477-497 (IALV…NPLF).

This sequence belongs to the complex I subunit 2 family. In terms of assembly, NDH-1 can be composed of about 15 different subunits; different subcomplexes with different compositions have been identified which probably have different functions.

Its subcellular location is the cellular thylakoid membrane. The catalysed reaction is a plastoquinone + NADH + (n+1) H(+)(in) = a plastoquinol + NAD(+) + n H(+)(out). It carries out the reaction a plastoquinone + NADPH + (n+1) H(+)(in) = a plastoquinol + NADP(+) + n H(+)(out). Its function is as follows. NDH-1 shuttles electrons from an unknown electron donor, via FMN and iron-sulfur (Fe-S) centers, to quinones in the respiratory and/or the photosynthetic chain. The immediate electron acceptor for the enzyme in this species is believed to be plastoquinone. Couples the redox reaction to proton translocation, and thus conserves the redox energy in a proton gradient. Cyanobacterial NDH-1 also plays a role in inorganic carbon-concentration. This is NAD(P)H-quinone oxidoreductase subunit 2 from Prochlorococcus marinus (strain MIT 9303).